Consider the following 66-residue polypeptide: Photosystem II reaction center protein H (66 aa).

A helical transmembrane segment spans residues 29–49; sequence PIMGLTMVLFLVFLLIILQIY.

This sequence belongs to the PsbH family. As to quaternary structure, PSII is composed of 1 copy each of membrane proteins PsbA, PsbB, PsbC, PsbD, PsbE, PsbF, PsbH, PsbI, PsbJ, PsbK, PsbL, PsbM, PsbT, PsbX, PsbY, PsbZ, Psb30/Ycf12, at least 3 peripheral proteins of the oxygen-evolving complex and a large number of cofactors. It forms dimeric complexes.

It is found in the plastid. The protein resides in the chloroplast thylakoid membrane. One of the components of the core complex of photosystem II (PSII), required for its stability and/or assembly. PSII is a light-driven water:plastoquinone oxidoreductase that uses light energy to abstract electrons from H(2)O, generating O(2) and a proton gradient subsequently used for ATP formation. It consists of a core antenna complex that captures photons, and an electron transfer chain that converts photonic excitation into a charge separation. The polypeptide is Photosystem II reaction center protein H (Thalassiosira pseudonana (Marine diatom)).